Reading from the N-terminus, the 430-residue chain is Tyrosine--tRNA ligase (430 aa).

L-tyrosine is bound at residue Y32. Residues 37–46 (PTADSLHIGH) carry the 'HIGH' region motif. L-tyrosine is bound by residues Y172 and Q176. Positions 232–236 (KFGKT) match the 'KMSKS' region motif. An ATP-binding site is contributed by K235. One can recognise an S4 RNA-binding domain in the interval 362-430 (ISLVDLLADA…KKSYYLIIVE (69 aa)).

This sequence belongs to the class-I aminoacyl-tRNA synthetase family. TyrS type 1 subfamily. Homodimer.

The protein resides in the cytoplasm. The enzyme catalyses tRNA(Tyr) + L-tyrosine + ATP = L-tyrosyl-tRNA(Tyr) + AMP + diphosphate + H(+). Functionally, catalyzes the attachment of tyrosine to tRNA(Tyr) in a two-step reaction: tyrosine is first activated by ATP to form Tyr-AMP and then transferred to the acceptor end of tRNA(Tyr). The polypeptide is Tyrosine--tRNA ligase (Porphyromonas gingivalis (strain ATCC 33277 / DSM 20709 / CIP 103683 / JCM 12257 / NCTC 11834 / 2561)).